The primary structure comprises 192 residues: uncharacterized protein (192 aa).

In terms of domain architecture, Nudix hydrolase spans 29 to 160; sequence HRQAAVLIPI…PLDIYRRGDS (132 aa). A Nudix box motif is present at residues 67-89; that stretch reads GAVDDTDTSVIAAALREAEEEVA. Positions 83 and 87 each coordinate Mg(2+).

The protein belongs to the Nudix hydrolase family. PCD1 subfamily. It depends on Mn(2+) as a cofactor. Mg(2+) is required as a cofactor.

In terms of biological role, probably mediates the hydrolysis of some nucleoside diphosphate derivatives. This is an uncharacterized protein from Escherichia fergusonii (strain ATCC 35469 / DSM 13698 / CCUG 18766 / IAM 14443 / JCM 21226 / LMG 7866 / NBRC 102419 / NCTC 12128 / CDC 0568-73).